A 469-amino-acid polypeptide reads, in one-letter code: GTPase Der (469 aa).

EngA-type G domains follow at residues 3-167 (PTVA…PDEV) and 175-348 (PKFA…RAAM). GTP is bound by residues 9 to 16 (GRPNVGKS), 56 to 60 (DTGGF), 119 to 122 (NKAE), 181 to 188 (GRPNVGKS), 228 to 232 (DTAGV), and 293 to 296 (NKWD). Residues 349–433 (SKLATPKLTR…PLRVQYKSSE (85 aa)) enclose the KH-like domain. The segment at 429-469 (YKSSENPFDNDEKDKPRAKPKPMSKMRGREKEVRYGKNSKK) is disordered.

The protein belongs to the TRAFAC class TrmE-Era-EngA-EngB-Septin-like GTPase superfamily. EngA (Der) GTPase family. As to quaternary structure, associates with the 50S ribosomal subunit.

GTPase that plays an essential role in the late steps of ribosome biogenesis. This chain is GTPase Der, found in Chromobacterium violaceum (strain ATCC 12472 / DSM 30191 / JCM 1249 / CCUG 213 / NBRC 12614 / NCIMB 9131 / NCTC 9757 / MK).